The chain runs to 494 residues: Membrane-bound lytic murein transglycosylase F 1 (494 aa).

Residues 1-24 form the signal peptide; it reads MRIMAVRLVAGAITLALMAYAWLA. The tract at residues 25 to 270 is non-LT domain; it reads WERARDPEPI…TLLEEHFGHL (246 aa). Residues 271–494 are LT domain; the sequence is GRFDYVGFRA…APLPADPPAD (224 aa). Glu-317 is an active-site residue. Residues 464 to 494 form a disordered region; it reads QVPAGEALGEPPLPTPPAPPGAPLPADPPAD. Residues 474-494 are compositionally biased toward pro residues; the sequence is PPLPTPPAPPGAPLPADPPAD.

This sequence in the N-terminal section; belongs to the bacterial solute-binding protein 3 family. The protein in the C-terminal section; belongs to the transglycosylase Slt family.

The protein resides in the cell outer membrane. It catalyses the reaction Exolytic cleavage of the (1-&gt;4)-beta-glycosidic linkage between N-acetylmuramic acid (MurNAc) and N-acetylglucosamine (GlcNAc) residues in peptidoglycan, from either the reducing or the non-reducing ends of the peptidoglycan chains, with concomitant formation of a 1,6-anhydrobond in the MurNAc residue.. Murein-degrading enzyme that degrades murein glycan strands and insoluble, high-molecular weight murein sacculi, with the concomitant formation of a 1,6-anhydromuramoyl product. Lytic transglycosylases (LTs) play an integral role in the metabolism of the peptidoglycan (PG) sacculus. Their lytic action creates space within the PG sacculus to allow for its expansion as well as for the insertion of various structures such as secretion systems and flagella. This Alkalilimnicola ehrlichii (strain ATCC BAA-1101 / DSM 17681 / MLHE-1) protein is Membrane-bound lytic murein transglycosylase F 1.